A 345-amino-acid chain; its full sequence is Putative mediator of RNA polymerase II transcription subunit 7 (345 aa).

Low complexity-rich tracts occupy residues 1 to 27 and 88 to 126; these read MNTS…TPQQ and NNNN…NNNN. Disordered stretches follow at residues 1-130 and 292-315; these read MNTS…KATT and TPLP…NNSQ.

This sequence belongs to the Mediator complex subunit 7 family. In terms of assembly, component of the Mediator complex.

It is found in the nucleus. Functionally, component of the Mediator complex, a coactivator involved in the regulated transcription of nearly all RNA polymerase II-dependent genes. Mediator functions as a bridge to convey information from gene-specific regulatory proteins to the basal RNA polymerase II transcription machinery. Mediator is recruited to promoters by direct interactions with regulatory proteins and serves as a scaffold for the assembly of a functional preinitiation complex with RNA polymerase II and the general transcription factors. In Dictyostelium discoideum (Social amoeba), this protein is Putative mediator of RNA polymerase II transcription subunit 7 (med7).